Here is a 609-residue protein sequence, read N- to C-terminus: NADH-ubiquinone oxidoreductase chain 5 (609 aa).

16 helical membrane passes run 3-23 (VINLFASSIITTLSMLTLPIV), 41-61 (TAISYAFMISMIPTTMFIYSG), 90-110 (MIFVPVALFVTWSIMEFSMWY), 115-135 (PFINRFFKYLLMFLITMMILV), 140-160 (LFQLFIGWEGVGIMSFLLIGW), 174-194 (AVLYNRIGDVGFIMAMAWFLI), 214-236 (VPLMGLLLAATGKSAQFGLHPWL), 244-264 (TPVSALLHSSTMVVAGVFLLI), 276-296 (MQTTTLCLGAITTLFTAICAL), 304-323 (IIAFSTSSQLGLMIVTIGIN), 328-350 (AFLHICTHAFFKAMLFLCSGSII), 368-388 (VLPFTTTSLIVGSLALTGMPF), 410-432 (WALLLTLVATSMTAAYSTRIMFF), 460-480 (LLLGSIFAGYLISYNITPTST), 491-511 (LMALTVTLLGFILALELNLTS), and 585-605 (GLIKLYFLSFIITLILALMMI).

It belongs to the complex I subunit 5 family. Core subunit of respiratory chain NADH dehydrogenase (Complex I) which is composed of 45 different subunits.

Its subcellular location is the mitochondrion inner membrane. It catalyses the reaction a ubiquinone + NADH + 5 H(+)(in) = a ubiquinol + NAD(+) + 4 H(+)(out). Core subunit of the mitochondrial membrane respiratory chain NADH dehydrogenase (Complex I) which catalyzes electron transfer from NADH through the respiratory chain, using ubiquinone as an electron acceptor. Essential for the catalytic activity and assembly of complex I. The protein is NADH-ubiquinone oxidoreductase chain 5 (MT-ND5) of Halichoerus grypus (Gray seal).